The sequence spans 175 residues: Rubredoxin-1 (175 aa).

2 consecutive Rubredoxin-like domains span residues 1–53 (MARY…FVLI) and 119–170 (FLKW…YVLY). 8 residues coordinate Fe cation: Cys6, Cys9, Cys39, Cys42, Cys124, Cys127, Cys157, and Cys160.

The protein belongs to the rubredoxin family. Fe(3+) serves as cofactor.

The protein localises to the cytoplasm. It participates in hydrocarbon metabolism; alkane degradation. Involved in the hydrocarbon hydroxylating system, which transfers electrons from NADH to rubredoxin reductase and then through rubredoxin to alkane 1 monooxygenase. The polypeptide is Rubredoxin-1 (alkG) (Pseudomonas putida (Arthrobacter siderocapsulatus)).